The primary structure comprises 61 residues: Cytotoxin 2 (61 aa).

4 disulfides stabilise this stretch: cysteine 3-cysteine 22, cysteine 15-cysteine 39, cysteine 43-cysteine 54, and cysteine 55-cysteine 60.

This sequence belongs to the three-finger toxin family. Short-chain subfamily. Type IB cytotoxin sub-subfamily. In terms of tissue distribution, expressed by the venom gland.

Its subcellular location is the secreted. This protein lyses red blood cells, has cytotoxic activity and induces hypotension, but is not neurotoxic. In addition, it induces direct paralysis of the muscle fiber. The sequence is that of Cytotoxin 2 from Hemachatus haemachatus (Rinkhals).